A 284-amino-acid chain; its full sequence is Four and a half LIM domains protein 5 (284 aa).

Residues 8-32 (CQYCTASLLGKKYVLKDDNLYCISC) form a C4-type zinc finger. 4 LIM zinc-binding domains span residues 39–100 (NYCE…ECSS), 101–160 (KCFH…KEFA), 161–220 (HYCN…LYAK), and 221–283 (KCAA…ADTD).

Interacts with CREM (via the third LIM domain). Interacts (via second LIM domain) with SPAG8.

It is found in the nucleus. Its function is as follows. May be involved in the regulation of spermatogenesis. Stimulates CREM transcriptional activity in a phosphorylation-independent manner. The chain is Four and a half LIM domains protein 5 (Fhl5) from Rattus norvegicus (Rat).